The chain runs to 448 residues: Tubulin beta-2 chain (448 aa).

The GTP site is built by Q11, E69, S138, G142, T143, G144, N204, and N226. Residue E69 coordinates Mg(2+). Residues 421–448 are disordered; the sequence is EYQQYQDATADEDGEYEDELDGQEEEDM. The span at 429–448 shows a compositional bias: acidic residues; it reads TADEDGEYEDELDGQEEEDM.

Belongs to the tubulin family. As to quaternary structure, dimer of alpha and beta chains. A typical microtubule is a hollow water-filled tube with an outer diameter of 25 nm and an inner diameter of 15 nM. Alpha-beta heterodimers associate head-to-tail to form protofilaments running lengthwise along the microtubule wall with the beta-tubulin subunit facing the microtubule plus end conferring a structural polarity. Microtubules usually have 13 protofilaments but different protofilament numbers can be found in some organisms and specialized cells. Requires Mg(2+) as cofactor.

The protein resides in the cytoplasm. Its subcellular location is the cytoskeleton. Tubulin is the major constituent of microtubules, a cylinder consisting of laterally associated linear protofilaments composed of alpha- and beta-tubulin heterodimers. Microtubules grow by the addition of GTP-tubulin dimers to the microtubule end, where a stabilizing cap forms. Below the cap, tubulin dimers are in GDP-bound state, owing to GTPase activity of alpha-tubulin. This Eleusine indica (Goosegrass) protein is Tubulin beta-2 chain (TUBB2).